Here is a 947-residue protein sequence, read N- to C-terminus: Regulator of spindle assembly protein 2 (947 aa).

Disordered stretches follow at residues 20-148 (EKPA…LSEQ) and 173-211 (SPHE…LKPR). 2 stretches are compositionally biased toward basic and acidic residues: residues 30–50 (PKYR…EGEK) and 62–84 (TRED…DLRI). Composition is skewed to polar residues over residues 90-102 (SATP…SDQY) and 179-188 (QQTIQESSEQ). Positions 276–320 (IIAEEAKKRRNEAEAVRKLIEVETQNAKKRAVIQELKDRIDKLTQ) form a coiled coil. Disordered regions lie at residues 407–453 (KINP…RRIG), 575–594 (ERES…LEIP), 600–662 (SVTT…GLII), and 681–705 (EQSL…FLLD). Over residues 411–422 (SSQLNQQSSSDA) the composition is skewed to low complexity. Residues 430 to 449 (EASTQMTSRLAESAMTQTSP) show a composition bias toward polar residues. Positions 563 to 591 (AGLSHYLEQVKKERESMEAQESESESMEL) form a coiled coil. A compositionally biased stretch (acidic residues) spans 580–590 (EAQESESESME). Positions 645-657 (FEHEIEEHKEPEK) are enriched in basic and acidic residues.

In terms of assembly, interacts with phosphatase regulatory subunit rsa-1 and tpxl-1. May interact with spd-5. May interact with sys-1.

Its subcellular location is the cytoplasm. The protein resides in the cytoskeleton. The protein localises to the microtubule organizing center. It is found in the centrosome. Its function is as follows. Recruits rsa-1 and, thereby, phosphatase let-92/paa-1 complex to the centrosomes. Recruits sys-1/beta-catenin to mitotic centrosomes during the first embryonic cell divisions. This Caenorhabditis elegans protein is Regulator of spindle assembly protein 2.